A 161-amino-acid polypeptide reads, in one-letter code: RNA pyrophosphohydrolase (161 aa).

A Nudix hydrolase domain is found at 12–154 (PYRPGVGMMI…KRKLYQAVVK (143 aa)). Residues 46–67 (GGIVPGETPSIAAMREMLEEIG) carry the Nudix box motif.

This sequence belongs to the Nudix hydrolase family. RppH subfamily. The cofactor is a divalent metal cation.

Its function is as follows. Accelerates the degradation of transcripts by removing pyrophosphate from the 5'-end of triphosphorylated RNA, leading to a more labile monophosphorylated state that can stimulate subsequent ribonuclease cleavage. This Rickettsia typhi (strain ATCC VR-144 / Wilmington) protein is RNA pyrophosphohydrolase.